Here is a 101-residue protein sequence, read N- to C-terminus: Small ribosomal subunit protein uS14 (101 aa).

Belongs to the universal ribosomal protein uS14 family. In terms of assembly, part of the 30S ribosomal subunit. Contacts proteins S3 and S10.

Its function is as follows. Binds 16S rRNA, required for the assembly of 30S particles and may also be responsible for determining the conformation of the 16S rRNA at the A site. The protein is Small ribosomal subunit protein uS14 of Ruthia magnifica subsp. Calyptogena magnifica.